A 57-amino-acid polypeptide reads, in one-letter code: UPF0057 membrane protein T23F2.4 (57 aa).

2 helical membrane-spanning segments follow: residues 3–23 and 36–56; these read ITCM…VGVF and ILLT…IILA.

Belongs to the UPF0057 (PMP3) family.

The protein localises to the membrane. The sequence is that of UPF0057 membrane protein T23F2.4 from Caenorhabditis elegans.